The sequence spans 307 residues: Probable RuBisCO transcriptional regulator (307 aa).

The 58-residue stretch at 5 to 62 folds into the HTH lysR-type domain; it reads FTLQQLRIFKAIASEKSFTQAAEILFVSQPSLSKQIKTLENRLGILLLNRTGNKILLT. Positions 22 to 41 form a DNA-binding region, H-T-H motif; that stretch reads FTQAAEILFVSQPSLSKQIK.

The protein belongs to the LysR transcriptional regulatory family.

The protein resides in the plastid. It is found in the chloroplast. Its function is as follows. Trans-acting transcriptional regulator of RuBisCO genes (rbcL and rbcS) expression. This chain is Probable RuBisCO transcriptional regulator (rbcR-A), found in Thalassiosira pseudonana (Marine diatom).